The primary structure comprises 326 residues: Beta-ketoacyl-[acyl-carrier-protein] synthase III (326 aa).

Catalysis depends on residues C112 and H251. The segment at 252–256 (QANSR) is ACP-binding. N281 is a catalytic residue.

Belongs to the thiolase-like superfamily. FabH family. Homodimer.

It localises to the cytoplasm. It catalyses the reaction malonyl-[ACP] + acetyl-CoA + H(+) = 3-oxobutanoyl-[ACP] + CO2 + CoA. It participates in lipid metabolism; fatty acid biosynthesis. In terms of biological role, catalyzes the condensation reaction of fatty acid synthesis by the addition to an acyl acceptor of two carbons from malonyl-ACP. Catalyzes the first condensation reaction which initiates fatty acid synthesis and may therefore play a role in governing the total rate of fatty acid production. Possesses both acetoacetyl-ACP synthase and acetyl transacylase activities. Its substrate specificity determines the biosynthesis of branched-chain and/or straight-chain of fatty acids. In Clostridium botulinum (strain Langeland / NCTC 10281 / Type F), this protein is Beta-ketoacyl-[acyl-carrier-protein] synthase III.